A 333-amino-acid chain; its full sequence is G-protein coupled receptor 146 (333 aa).

The Extracellular segment spans residues 1 to 22; the sequence is MWSCGPLNSTAWAEEPLCRNLR. N-linked (GlcNAc...) asparagine glycosylation is present at N8. Residues 23–43 form a helical membrane-spanning segment; that stretch reads LGLWVLSLLYLGAGVPVSLGY. The Cytoplasmic portion of the chain corresponds to 44 to 64; sequence NALLVLANLASKNTMTMPDVY. A helical membrane pass occupies residues 65-85; it reads FVNMAVAGLVLTALAPAYLLG. At 86-101 the chain is on the extracellular side; sequence PAHSRWALWSLSSEAH. The chain crosses the membrane as a helical span at residues 102-122; sequence VTLLILFNVASLVTMYSTALL. Topologically, residues 123 to 145 are cytoplasmic; that stretch reads SLDYYIERALPRTYMASVYNTRH. Residues 146 to 166 traverse the membrane as a helical segment; sequence VCGFVWGGAVLTSFSSLLFYI. Topologically, residues 167–188 are extracellular; it reads CSHVSSRIAECARMQNTEAADA. The helical transmembrane segment at 189–209 threads the bilayer; it reads ILVLIGYVVPGLAVLYALALI. The Cytoplasmic segment spans residues 210–232; it reads SRIGKEDTPLDQDTSRLDPSVHR. The helical transmembrane segment at 233 to 253 threads the bilayer; that stretch reads LLVATVCTQFGLWTPYYLSLG. Residues 254-277 are Extracellular-facing; that stretch reads HTVLTSRGRTVEGHYLGILQVAKD. Residues 278–298 traverse the membrane as a helical segment; that stretch reads LAKFLAFSSSSVTPLLYRYIN. Residues 299–333 lie on the Cytoplasmic side of the membrane; that stretch reads KAFPGKLRRLMKKMHCGRRHCSPDPSGIQQVMAQA.

The protein belongs to the G-protein coupled receptor 1 family.

It localises to the cell membrane. Functionally, GPCR receptor required for the regulation of plasma cholesterol levels. Receptor for CHLSN, a gut derived hormone which mediates an inhibitory effect of intestinal cholesterol absorption on hepatic cholesterol synthesis. Cholesin-binding exerts an antagonistic effect by inhibiting PKA signaling and suppressing SREBF2-controlled cholesterol in the liver. The polypeptide is G-protein coupled receptor 146 (Gpr146) (Mus musculus (Mouse)).